A 498-amino-acid polypeptide reads, in one-letter code: Acetyl-coenzyme A carboxylase carboxyl transferase subunit beta, chloroplastic (498 aa).

The region spanning leucine 228 to threonine 498 is the CoA carboxyltransferase N-terminal domain. Residues cysteine 232, cysteine 235, cysteine 251, and cysteine 254 each coordinate Zn(2+). The C4-type zinc finger occupies cysteine 232 to cysteine 254.

It belongs to the AccD/PCCB family. As to quaternary structure, acetyl-CoA carboxylase is a heterohexamer composed of biotin carboxyl carrier protein, biotin carboxylase and 2 subunits each of ACCase subunit alpha and ACCase plastid-coded subunit beta (accD). Zn(2+) is required as a cofactor.

The protein localises to the plastid. It is found in the chloroplast stroma. The catalysed reaction is N(6)-carboxybiotinyl-L-lysyl-[protein] + acetyl-CoA = N(6)-biotinyl-L-lysyl-[protein] + malonyl-CoA. The protein operates within lipid metabolism; malonyl-CoA biosynthesis; malonyl-CoA from acetyl-CoA: step 1/1. In terms of biological role, component of the acetyl coenzyme A carboxylase (ACC) complex. Biotin carboxylase (BC) catalyzes the carboxylation of biotin on its carrier protein (BCCP) and then the CO(2) group is transferred by the transcarboxylase to acetyl-CoA to form malonyl-CoA. The polypeptide is Acetyl-coenzyme A carboxylase carboxyl transferase subunit beta, chloroplastic (Populus trichocarpa (Western balsam poplar)).